The chain runs to 314 residues: tRNA-cytidine(32) 2-sulfurtransferase (314 aa).

The short motif at Ser-58–Ser-63 is the PP-loop motif element. [4Fe-4S] cluster contacts are provided by Cys-133, Cys-136, and Cys-224.

Belongs to the TtcA family. Homodimer. Mg(2+) is required as a cofactor. [4Fe-4S] cluster serves as cofactor.

It localises to the cytoplasm. The enzyme catalyses cytidine(32) in tRNA + S-sulfanyl-L-cysteinyl-[cysteine desulfurase] + AH2 + ATP = 2-thiocytidine(32) in tRNA + L-cysteinyl-[cysteine desulfurase] + A + AMP + diphosphate + H(+). It participates in tRNA modification. Catalyzes the ATP-dependent 2-thiolation of cytidine in position 32 of tRNA, to form 2-thiocytidine (s(2)C32). The sulfur atoms are provided by the cysteine/cysteine desulfurase (IscS) system. This is tRNA-cytidine(32) 2-sulfurtransferase from Polaromonas naphthalenivorans (strain CJ2).